The primary structure comprises 206 residues: Erythropoietin (206 aa).

The signal sequence occupies residues 1–40 (MCEPAPPKPTQSAWHSFPECPALLLLLSLLLLPLGLPVLG). 2 cysteine pairs are disulfide-bonded: Cys-47/Cys-201 and Cys-69/Cys-73. A glycan (N-linked (GlcNAc...) asparagine) is linked at Asn-64. N-linked (GlcNAc...) asparagine glycans are attached at residues Asn-78 and Asn-123.

The protein belongs to the EPO/TPO family. As to expression, produced by kidney or liver of adult mammals and by liver of fetal or neonatal mammals.

Its subcellular location is the secreted. Its function is as follows. Hormone involved in the regulation of erythrocyte proliferation and differentiation and the maintenance of a physiological level of circulating erythrocyte mass. Binds to EPOR leading to EPOR dimerization and JAK2 activation thereby activating specific downstream effectors, including STAT1 and STAT3. In Canis lupus familiaris (Dog), this protein is Erythropoietin (EPO).